Consider the following 351-residue polypeptide: Protein RecA (351 aa).

Residue 68–75 coordinates ATP; it reads GPESSGKT.

This sequence belongs to the RecA family.

The protein localises to the cytoplasm. In terms of biological role, can catalyze the hydrolysis of ATP in the presence of single-stranded DNA, the ATP-dependent uptake of single-stranded DNA by duplex DNA, and the ATP-dependent hybridization of homologous single-stranded DNAs. It interacts with LexA causing its activation and leading to its autocatalytic cleavage. This Thermotoga neapolitana (strain ATCC 49049 / DSM 4359 / NBRC 107923 / NS-E) protein is Protein RecA.